The primary structure comprises 544 residues: O-phosphoserine--tRNA(Cys) ligase (544 aa).

Residues 194–196 (HMT), 239–241 (SAS), 281–282 (YY), and asparagine 335 each bind substrate.

Belongs to the class-II aminoacyl-tRNA synthetase family. O-phosphoseryl-tRNA(Cys) synthetase subfamily. In terms of assembly, homotetramer. Interacts with SepCysS.

The catalysed reaction is tRNA(Cys) + O-phospho-L-serine + ATP = O-phospho-L-seryl-tRNA(Cys) + AMP + diphosphate. In terms of biological role, catalyzes the attachment of O-phosphoserine (Sep) to tRNA(Cys). The sequence is that of O-phosphoserine--tRNA(Cys) ligase from Methanopyrus kandleri (strain AV19 / DSM 6324 / JCM 9639 / NBRC 100938).